Consider the following 177-residue polypeptide: MSRVAKNPVKLPAGVEVKFAGQQLSVKGAKGTLELNVHSSVEIVQEAGELRFAARNGDQQTRAMAGTTRALVNNMVQGVSQGFERKLQLVGVGYKAQAKGTVLNLALGFSHPVDYELPEGITAETPSQTDILIKGIDKQLVGQVAAEIRDFRPPEPYKGKGVRYADEVVRRKEAKKK.

Belongs to the universal ribosomal protein uL6 family. As to quaternary structure, part of the 50S ribosomal subunit.

In terms of biological role, this protein binds to the 23S rRNA, and is important in its secondary structure. It is located near the subunit interface in the base of the L7/L12 stalk, and near the tRNA binding site of the peptidyltransferase center. The polypeptide is Large ribosomal subunit protein uL6 (Pseudomonas fluorescens (strain ATCC BAA-477 / NRRL B-23932 / Pf-5)).